We begin with the raw amino-acid sequence, 377 residues long: Geranylgeranyl transferase type-1 subunit beta (377 aa).

4 PFTB repeats span residues 144–186 (KEAC…YMLN), 193–234 (MKKA…CLMG), 245–284 (LNRI…KLLK), and 291–333 (FEKN…SLME). Geranylgeranyl diphosphate contacts are provided by residues 219–221 (HGG) and 263–266 (RPNK). Residues Asp269 and Cys271 each contribute to the Zn(2+) site. A geranylgeranyl diphosphate-binding site is contributed by 272–275 (YSFW). Residue His321 participates in Zn(2+) binding.

The protein belongs to the protein prenyltransferase subunit beta family. As to quaternary structure, heterodimer of FNTA and PGGT1B. PGGT1B mediates interaction with substrate peptides. Requires Zn(2+) as cofactor. The cofactor is Mg(2+).

It carries out the reaction geranylgeranyl diphosphate + L-cysteinyl-[protein] = S-geranylgeranyl-L-cysteinyl-[protein] + diphosphate. Its function is as follows. Catalyzes the transfer of a geranyl-geranyl moiety from geranyl-geranyl pyrophosphate to a cysteine at the fourth position from the C-terminus of proteins having the C-terminal sequence Cys-aliphatic-aliphatic-X. Known substrates include RAC1, RAC2, RAP1A and RAP1B. The chain is Geranylgeranyl transferase type-1 subunit beta (PGGT1B) from Bos taurus (Bovine).